Here is a 305-residue protein sequence, read N- to C-terminus: 2-oxoacid:ferredoxin oxidoreductase subunit beta (305 aa).

Residues C12, C15, and C46 each contribute to the [4Fe-4S] cluster site. Residues 44 to 47 and H65 contribute to the thiamine diphosphate site; that span reads IGCS. D90 provides a ligand contact to Mg(2+). 91–92 contributes to the thiamine diphosphate binding site; that stretch reads GD. Mg(2+)-binding residues include N118 and V120. 122–123 contacts thiamine diphosphate; the sequence is GL. A [4Fe-4S] cluster-binding site is contributed by C197.

Heterodimer composed of an alpha and a beta subunit. [4Fe-4S] cluster serves as cofactor. Requires thiamine diphosphate as cofactor. Mg(2+) is required as a cofactor.

The protein localises to the cytoplasm. It carries out the reaction a 2-oxocarboxylate + 2 oxidized [2Fe-2S]-[ferredoxin] + CoA = an acyl-CoA + 2 reduced [2Fe-2S]-[ferredoxin] + CO2 + H(+). In terms of biological role, catalyzes the coenzyme A-dependent oxidative decarboxylation of different 2-oxoacids such as 2-oxoglutarate, pyruvate and 2-oxobutyrate to form their CoA derivatives. The protein is 2-oxoacid:ferredoxin oxidoreductase subunit beta of Sulfolobus sp.